The sequence spans 406 residues: Acetylornithine aminotransferase (406 aa).

Residues 113-114 (GT) and phenylalanine 145 contribute to the pyridoxal 5'-phosphate site. Arginine 148 serves as a coordination point for N(2)-acetyl-L-ornithine. 233-236 (DEIQ) serves as a coordination point for pyridoxal 5'-phosphate. Lysine 262 carries the N6-(pyridoxal phosphate)lysine modification. Residue serine 290 coordinates N(2)-acetyl-L-ornithine. Residue threonine 291 coordinates pyridoxal 5'-phosphate.

This sequence belongs to the class-III pyridoxal-phosphate-dependent aminotransferase family. ArgD subfamily. As to quaternary structure, homodimer. It depends on pyridoxal 5'-phosphate as a cofactor.

The protein localises to the cytoplasm. It carries out the reaction N(2)-acetyl-L-ornithine + 2-oxoglutarate = N-acetyl-L-glutamate 5-semialdehyde + L-glutamate. The protein operates within amino-acid biosynthesis; L-arginine biosynthesis; N(2)-acetyl-L-ornithine from L-glutamate: step 4/4. This Leptospira interrogans serogroup Icterohaemorrhagiae serovar Lai (strain 56601) protein is Acetylornithine aminotransferase.